The primary structure comprises 335 residues: Protein STRICTOSIDINE SYNTHASE-LIKE 12 (335 aa).

The first 22 residues, 1 to 22 (MTSFCSMISLLLLLSLSSAVFS), serve as a signal peptide directing secretion. A glycan (N-linked (GlcNAc...) asparagine) is linked at Asn-80.

Belongs to the strictosidine synthase family.

It localises to the vacuole. The catalysed reaction is 3alpha(S)-strictosidine + H2O = secologanin + tryptamine. It functions in the pathway alkaloid biosynthesis; 3alpha(S)-strictosidine biosynthesis; 3alpha(S)-strictosidine from secologanin and tryptamine: step 1/1. Catalyzes the stereospecific condensation of tryptamine with secologanin to form strictosidine, the key intermediate of indole alkaloid biosynthesis. The chain is Protein STRICTOSIDINE SYNTHASE-LIKE 12 from Arabidopsis thaliana (Mouse-ear cress).